We begin with the raw amino-acid sequence, 90 residues long: Probable Fe(2+)-trafficking protein (90 aa).

The protein belongs to the Fe(2+)-trafficking protein family.

In terms of biological role, could be a mediator in iron transactions between iron acquisition and iron-requiring processes, such as synthesis and/or repair of Fe-S clusters in biosynthetic enzymes. This Herminiimonas arsenicoxydans protein is Probable Fe(2+)-trafficking protein.